We begin with the raw amino-acid sequence, 130 residues long: Small ribosomal subunit protein uS8 (130 aa).

Belongs to the universal ribosomal protein uS8 family. As to quaternary structure, part of the 30S ribosomal subunit.

Functionally, one of the primary rRNA binding proteins, it binds directly to 16S rRNA central domain where it helps coordinate assembly of the platform of the 30S subunit. The protein is Small ribosomal subunit protein uS8 of Methanosarcina barkeri (strain Fusaro / DSM 804).